The chain runs to 798 residues: MIKKILTTCFGLVFGFCVFGVGLVAIAILVTYPKLPSLDSLQHYQPKMPLTIYSADGEVIGMYGEQRREFTKIGDFPEVLRNAVIAAEDKRFYRHWGVDVWGVARAAVGNVVSGSVQSGASTITQQVAKNFYLSSEKTFTRKFNEVLLAYKIEQSLSKDKILELYFNQIYLGQRAYGFASAAQIYFNKNVRDLTLAEAAMLAGLPKAPSAYNPIVNPERAKLRQKYILNNMLEEKMITVQQRDQALNEELHYERFVRKIDQSALYVAEMVRQELYEKYGEDAYTQGFKVYTTVRADHQKVATEALRKALRNFDRGSSYRGAENYIDLSKSEDVEETVSQYLSGLYTVDKMVPAVVLDVTKKKNVVIQLPGGRRVTLDRRALGFAARAVNNEKMGEDRIRRGAVIRVKNNGGRWAVVQEPLLQGALVSLDAKTGAVRALVGGYDFHSKTFNRAVQAMRQPGSTFKPFVYSAALSKGMTASTVVNDAPISLPGKGPNGSVWTPKNSDGRYSGYITLRQALTASKNMVSIRILMSIGVGYAQQYIRRFGFRSSELPASLSMALGTGETTPLKVAEAYSVFANGGYRVSSHVIDKIYDRDGRLRAQMQPLVAGQNAPQAIDPRNAYIMYKIMQDVVRVGTARGAAALGRTDIAGKTGTTNDNKDAWFVGFNPDVVTAVYIGFDKPKSMGRVGYGGTIAVPVWVDYMRFALKGKQGKGMKMPEGVVSSNGEYYMKERMVTDPGLTLDNSGIAPQPSRRAKEDDGGAAEGGRQAADDEVRQDMQETPVLPSNTGSKQQQLDSLF.

The Cytoplasmic portion of the chain corresponds to 1–9; that stretch reads MIKKILTTC. A helical; Signal-anchor for type II membrane protein transmembrane segment spans residues 10–30; sequence FGLVFGFCVFGVGLVAIAILV. Residues 31–798 lie on the Periplasmic side of the membrane; the sequence is TYPKLPSLDS…SKQQQLDSLF (768 aa). A transglycosylase region spans residues 50-218; it reads LTIYSADGEV…SAYNPIVNPE (169 aa). Glutamate 88 functions as the Proton donor; for transglycosylase activity in the catalytic mechanism. The interval 378 to 700 is transpeptidase; it reads RRALGFAARA…GTIAVPVWVD (323 aa). Serine 461 (acyl-ester intermediate; for transpeptidase activity) is an active-site residue. Positions 738 to 798 are disordered; that stretch reads GLTLDNSGIA…SKQQQLDSLF (61 aa). Basic and acidic residues predominate over residues 768-777; the sequence is AADDEVRQDM. Residues 783 to 798 show a composition bias toward polar residues; the sequence is LPSNTGSKQQQLDSLF.

It in the N-terminal section; belongs to the glycosyltransferase 51 family. In the C-terminal section; belongs to the transpeptidase family.

The protein resides in the cell inner membrane. The catalysed reaction is [GlcNAc-(1-&gt;4)-Mur2Ac(oyl-L-Ala-gamma-D-Glu-L-Lys-D-Ala-D-Ala)](n)-di-trans,octa-cis-undecaprenyl diphosphate + beta-D-GlcNAc-(1-&gt;4)-Mur2Ac(oyl-L-Ala-gamma-D-Glu-L-Lys-D-Ala-D-Ala)-di-trans,octa-cis-undecaprenyl diphosphate = [GlcNAc-(1-&gt;4)-Mur2Ac(oyl-L-Ala-gamma-D-Glu-L-Lys-D-Ala-D-Ala)](n+1)-di-trans,octa-cis-undecaprenyl diphosphate + di-trans,octa-cis-undecaprenyl diphosphate + H(+). It carries out the reaction Preferential cleavage: (Ac)2-L-Lys-D-Ala-|-D-Ala. Also transpeptidation of peptidyl-alanyl moieties that are N-acyl substituents of D-alanine.. It participates in cell wall biogenesis; peptidoglycan biosynthesis. In terms of biological role, cell wall formation. Synthesis of cross-linked peptidoglycan from the lipid intermediates. The enzyme has a penicillin-insensitive transglycosylase N-terminal domain (formation of linear glycan strands) and a penicillin-sensitive transpeptidase C-terminal domain (cross-linking of the peptide subunits). The polypeptide is Penicillin-binding protein 1A (mrcA) (Neisseria meningitidis serogroup A / serotype 4A (strain DSM 15465 / Z2491)).